Reading from the N-terminus, the 300-residue chain is Glycine--tRNA ligase alpha subunit (300 aa).

Belongs to the class-II aminoacyl-tRNA synthetase family. As to quaternary structure, tetramer of two alpha and two beta subunits.

The protein resides in the cytoplasm. It carries out the reaction tRNA(Gly) + glycine + ATP = glycyl-tRNA(Gly) + AMP + diphosphate. The sequence is that of Glycine--tRNA ligase alpha subunit from Pseudoalteromonas translucida (strain TAC 125).